A 179-amino-acid polypeptide reads, in one-letter code: Large ribosomal subunit protein uL5 (179 aa).

The residue at position 3 (Lys-3) is an N6-acetyllysine.

The protein belongs to the universal ribosomal protein uL5 family. As to quaternary structure, part of the 50S ribosomal subunit; part of the 5S rRNA/L5/L18/L25 subcomplex. Contacts the 5S rRNA and the P site tRNA. Forms a bridge to the 30S subunit in the 70S ribosome.

This is one of the proteins that bind and probably mediate the attachment of the 5S RNA into the large ribosomal subunit, where it forms part of the central protuberance. In the 70S ribosome it contacts protein S13 of the 30S subunit (bridge B1b), connecting the 2 subunits; this bridge is implicated in subunit movement. Contacts the P site tRNA; the 5S rRNA and some of its associated proteins might help stabilize positioning of ribosome-bound tRNAs. The protein is Large ribosomal subunit protein uL5 of Shigella flexneri.